A 155-amino-acid polypeptide reads, in one-letter code: Small ribosomal subunit protein uS7cz/uS7cy (155 aa).

The protein belongs to the universal ribosomal protein uS7 family. As to quaternary structure, part of the 30S ribosomal subunit.

Its subcellular location is the plastid. It localises to the chloroplast. Its function is as follows. One of the primary rRNA binding proteins, it binds directly to 16S rRNA where it nucleates assembly of the head domain of the 30S subunit. The sequence is that of Small ribosomal subunit protein uS7cz/uS7cy (rps7-A) from Phaseolus vulgaris (Kidney bean).